Consider the following 111-residue polypeptide: Ig kappa chain V-III region CBPC 101 (111 aa).

A framework-1 region spans residues 1 to 23 (DIVLTQSPASLAVSLGQRATISC). A disulfide bridge connects residues Cys23 and Cys92. The tract at residues 24–38 (KASQSVDYTGESYMN) is complementarity-determining-1. A framework-2 region spans residues 39 to 53 (WYQQNPGQSPKLLIY). Residues 54-60 (AASNLES) form a complementarity-determining-2 region. A framework-3 region spans residues 61 to 92 (GIPARFSGSGSGTDFTLNIHPVEEEDAATYYC). The interval 93 to 101 (QQSNEDPYT) is complementarity-determining-3. A framework-4 region spans residues 102–111 (FGGGTKLEIK).

The protein is Ig kappa chain V-III region CBPC 101 of Mus musculus (Mouse).